Here is a 62-residue protein sequence, read N- to C-terminus: Large ribosomal subunit protein bL28 (62 aa).

It belongs to the bacterial ribosomal protein bL28 family.

The polypeptide is Large ribosomal subunit protein bL28 (Helicobacter hepaticus (strain ATCC 51449 / 3B1)).